Here is a 136-residue protein sequence, read N- to C-terminus: Histone H3.4 (136 aa).

Residues 1-41 (MARTKQTARKSTSIKAPRKQLAAKAARKSAPISGGIKKPHK) are disordered.

Belongs to the histone H3 family. As to quaternary structure, the nucleosome is a histone octamer containing two molecules each of H2A, H2B, H3 and H4 assembled in one H3-H4 heterotetramer and two H2A-H2B heterodimers. The octamer wraps approximately 147 bp of DNA.

Its subcellular location is the nucleus. The protein localises to the chromosome. Functionally, macronuclear replacement variant which replaces conventional H3 in a subset of nucleosomes. Nucleosomes wrap and compact DNA into chromatin, limiting DNA accessibility to the cellular machineries which require DNA as a template. Histones thereby play a central role in transcription regulation, DNA repair, DNA replication and chromosomal stability. DNA accessibility is regulated via a complex set of post-translational modifications of histones, also called histone code, and nucleosome remodeling. Functions redundantly to H3.3. H3.4 deposition is mainly transcription-associated, DNA replication-independent. Although not essential for vegetative growth, minor H3 variants are required for producing viable conjugation progeny by affecting late developmental stages of conjugation. The chain is Histone H3.4 (HHT4) from Tetrahymena thermophila (strain SB210).